A 158-amino-acid chain; its full sequence is MIRIGHGFDVHRFGGEGPIIIGGVKIPYEQGLIAHSDGDVALHALSDALLGAIAAGDIGRHFPDTDDKWKGADSRELLKDVYRRVKAQGYVLGNADVTIIAQAPKMAPYIQAMCAAIAEDLETDLGNINVKATTTEKLGFTGRKEGIACEAVVLLRKA.

A divalent metal cation-binding residues include Asp-9 and His-11. Residues 9–11 (DVH) and 35–36 (HS) each bind 4-CDP-2-C-methyl-D-erythritol 2-phosphate. Residue His-43 participates in a divalent metal cation binding. 4-CDP-2-C-methyl-D-erythritol 2-phosphate contacts are provided by residues 57–59 (DIG), 62–66 (FPDTD), 101–107 (AQAPKMA), 133–136 (TTTE), Phe-140, and Arg-143.

This sequence belongs to the IspF family. As to quaternary structure, homotrimer. A divalent metal cation serves as cofactor.

It carries out the reaction 4-CDP-2-C-methyl-D-erythritol 2-phosphate = 2-C-methyl-D-erythritol 2,4-cyclic diphosphate + CMP. It participates in isoprenoid biosynthesis; isopentenyl diphosphate biosynthesis via DXP pathway; isopentenyl diphosphate from 1-deoxy-D-xylulose 5-phosphate: step 4/6. In terms of biological role, involved in the biosynthesis of isopentenyl diphosphate (IPP) and dimethylallyl diphosphate (DMAPP), two major building blocks of isoprenoid compounds. Catalyzes the conversion of 4-diphosphocytidyl-2-C-methyl-D-erythritol 2-phosphate (CDP-ME2P) to 2-C-methyl-D-erythritol 2,4-cyclodiphosphate (ME-CPP) with a corresponding release of cytidine 5-monophosphate (CMP). This Vibrio cholerae serotype O1 (strain ATCC 39541 / Classical Ogawa 395 / O395) protein is 2-C-methyl-D-erythritol 2,4-cyclodiphosphate synthase.